A 3023-amino-acid chain; its full sequence is MAATMIFGSFTHDLLGKAMSTIHSAVTAEKDIFSSIKERLERKRHGKICRMKNGSIYIKAASSTKVEKINAAAKKLADDKAAFLKAQPTIVDKIIVNEKIQVVEAEEVHKREDVQTVFFKKTKKRAPKLRATCSSSGLDNLYNAVANIAKASSLRVEVIHKKRVCGEFKQTRFGRALFIDVAHAKGHRRRIDCRMHRREQRTMHMFMRKTTKTEVRSKHLRKGDSGIVLLTQKIKGHLSGVRDEFFIVRGTCDDSLLEARARFSQSITLRATHFSTGDIFWKGFNASFQEQKAIGLDHTCTSDLPVEACGHVAALMCQSLFPCGKITCKRCIANLSNLDFDTFSELQGDRAMRILDVMRARFPSFTHTIRFLHDLFTQRRVTNPNTAAFREILRLIGDRNEAPFAHVNRLNEILLLGSKANPDSLAKASDSLLELARYLNNRTENIRNGSLKHFRNKISSKAHSNLALSCDNQLDQNGNFLWGLAGIAAKRFLNNYFETIDPEQGYDKYVIRKNPNGERKLAIGNFIISTNLEKLRDQLEGESIARVGITEECVSRKDGNYRYPCCCVTLEDGSPMYSELKMPTKNHLVIGNSGDPKYLDLPGEISNLMYIAKEGYCYINIFLAMLVNVDEANAKDFTKRVRDESVQKLGKWPSLIDVATECALLSTYYPAAASAELPRLLVDHAQKTIHVVDSYGSLNTGYHILKANTVSQLEKFASNTLESPMAQYKVGGLVYSENNDASAVKALTQAIFRPDVLSELIEKEPYLMVFALVSPGILMAMSNSGALEFGISKWISSDHSLVRMASILKTLASKVSVADTLALQKHIMRQNANFLCGELINGFQKKKSYTHATRFLLMISEENEMDDPVLNAGYRVLEASSHEIMEKTYLALLETSWSDLSLYGKFKSIWFTRKHFGRYKAELFPKEQTDLQGRYSNSLRFHYQSTLKRLRNKGSLCRERFLESISSARRRTTCAVFSLLHKAFPDVLKFINTLVIVSLSMQIYYMLVAIIHEHRAAKIKSAQLEERVLEDKTMLLYDDFKAKLPEGSFEEFLEYTRQRDKEVYEYLMMETTEIVEFQAKNTGQASLERIIAFVSLTLMLFDNERSDCVYKILTKFKGILGSVENNVRFQSLDTIVPTQEEKNMVIDFELDSDTAHTPQMQEQTFSDWWSNQIANNRVVPHYRTEGYFMQFTRNTASAVSHQIAHNEHKDIILMGAVGSGKSTGLPTNLCKFGGVLLLEPTRPLAENVTKQMRGSPFFASPTLRMRNLSTFGSSPITVMTTGFALHFFANNVKEFDRYQFIIFDEFHVLDSNAIAFRNLCHEYSYNGKIIKVSATPPGRECDLTTQYPVELLIEEQLSLRDFVDAQGTDAHADVVKKGDNILVYVASYNEVDQLSKMLNERGFLVTKVDGRTMKLGGVEIITKGSSIKKHFIVATNIIENGVTLDVDVVVDFGLKVVPNLDSDNRLVSYCKIPISLGERIQRFGRVGRNKPGVALRIGETIKGLVEIPSMIATEAAFLCFVYGLPVTTQNVSTSILSQVSVRQARVMCQFELPIFYTAHLVRYDGAMHPAIHNALKRFKLRDSEINLNTLAIPTSSSKTWYTGKCYKQLVGRLDIPDEIKIPFYTKEVPEKVPEQIWDVMVKFSSDAGFGRMTSAAACKVAYTLQTDIHSIQRTVQIIDRLLENEMKKRNHFNLVVNQSCSSHFMSLSSIMASLRAHYAKNHTGQNIEILQKAKAQLLEFSNLAIDPSTTEALRDFGYLEAVRFQSESEMARGLKLSGHWKWSLISRDLIVVSGVGIGLGCMLWQFFKEKMHEPVKFQGKSRRRLQFRKARDDKMGYIMHGEGDTIEHFFGAAYTKKGKSKGKTHGAGTKAHKFVNMYGVSPDEYSYVRYLDPVTGATLDESPMTDLNIVQEHFGEIRREAILADAMSPQQRNKGIQAYFVRNSTMPILKVDLTPHIPLKVCESNNIAGFPEREGELRRTGPTETLPFDALPPEKQEVAFESKALLKGVRDFNPISACVWLLENSSDGHSERLFGIGFGPYIIANQHLFRRNNGELTIKTMHGEFKVKNSTQLQMKPVEGRDIIVIKMAKDFPPFPQKLKFRQPTIKDRVCMVSTNFQQKSVSSLVSESSHIVHKEDTSFWQHWITTKDGQCGSPLVSIIDGNILGIHSLTHTTNGSNYFVEFPEKFVATYLDAADGWCKNWKFNADKISWGSFTLVEDAPEDDFMAKKTVAAIMDDLVRTQGEKRKWMLEAAHTNIQPVAHLQSQLVTKHIVKGRCKMFALYLQENADARDFFKSFMGAYGPSHLNKEAYIKDIMKYSKQIVVGSVDCDTFESSLKVLSRKMKEWGFENLEYVTDEQTIKNALNMDAAVGALYSGKKKQYFEDLSDDAVANLVQKSCLRLFKNKLGVWNGSLKAELRPFEKLIENKTRTFTAAPIETLLGGKVCVDDFNNHFYSKHIQCPWSVGMTKFYGGWNELLGKLPDGWVYCDADGSQFDSSLSPYLINAVLRLRLSSMEEWDVGQKMLQNLYTEIVYTPISTPDGTIVKKFKGNNSGQPSTVVDNTLMVVLAMYYALSKLGVDINSQEDVCKFFANGDDLIIAISPELEHVLDGFQQHFSDLGLNYDFSSRTRDKKELWFMSHRALSKDGILIPKLEPERIVSILEWDRSAEPHHRLEAICASMIEAWGYTDLLQNIRRFYKWTIEQEPYRSLAEQGLAPYLSEVALRRLYTSQIATDNELTDYYKEILANNEFLRETVRFQSDTVDAGKDKARDQKLADKPTLAIDRTKDKDVNTGTSGTFSIPRLKKAAMNMKLPKVGGSSVVNLDHLLTYKPAQEFVVNTRATHSQFKAWHTNVMAELELNEEQMKIVLNGFMIWCIENGTSPNISGVWTMMDGDEQVEYPIEPMVKHANPSLRQIMKHFSNLAEAYIRMRNSEQVYIPRYGLQRGLVDRNLAPFAFDFFEVNGATPVRAREAHAQMKAAALRNSQQRMFCLDGSVSGQEENTERHTVDDVNAQMHHLLGVKGV.

The Peptidase S30 domain maps to 132-274; the sequence is TCSSSGLDNL…QSITLRATHF (143 aa). Catalysis depends on for P1 proteinase activity residues H183, D192, and S225. Residues 325 to 328 carry the Involved in interaction with stylet and aphid transmission motif; that stretch reads KITC. Positions 583 to 585 match the Involved in virions binding and aphid transmission motif; sequence PTK. One can recognise a Peptidase C6 domain in the interval 609–731; it reads MYIAKEGYCY…ESPMAQYKVG (123 aa). Residues C617 and H690 each act as for helper component proteinase activity in the active site. The 153-residue stretch at 1202 to 1354 folds into the Helicase ATP-binding domain; the sequence is QIAHNEHKDI…TQYPVELLIE (153 aa). 1215–1222 contacts ATP; sequence GAVGSGKS. Positions 1304–1307 match the DEFH box motif; that stretch reads DEFH. The Helicase C-terminal domain maps to 1367–1532; the sequence is GTDAHADVVK…GLPVTTQNVS (166 aa). A GxxxG motif motif is present at residues 1796–1800; that stretch reads GIGLG. The short motif at 1856–1863 is the Nuclear localization signal element; sequence KKGKSKGK. Y1878 is modified (O-(5'-phospho-RNA)-tyrosine). Y1878 carries the post-translational modification O-UMP-tyrosine; transient. The Peptidase C4 domain maps to 2002–2218; the sequence is SKALLKGVRD…ISWGSFTLVE (217 aa). Residues H2047, D2082, and C2152 each act as for nuclear inclusion protein A activity in the active site. The RdRp catalytic domain maps to 2484 to 2608; the sequence is WVYCDADGSQ…AISPELEHVL (125 aa). T3006 bears the Phosphothreonine mark.

Belongs to the potyviridae genome polyprotein family. As to quaternary structure, interacts with host eIF4E protein (via cap-binding region); this interaction mediates the translation of the VPg-viral RNA conjugates. Part of a complex that comprises VPg, RNA, host EIF4E and EIF4G; this interaction mediates the translation of the VPg-viral RNA conjugates. Post-translationally, VPg is uridylylated by the polymerase and is covalently attached to the 5'-end of the genomic RNA. This uridylylated form acts as a nucleotide-peptide primer for the polymerase. In terms of processing, potyviral RNA is expressed as two polyproteins which undergo post-translational proteolytic processing. Genome polyprotein is processed by NIa-pro, P1 and HC-pro proteinases resulting in the production of at least ten individual proteins. P3N-PIPO polyprotein is cleaved by P1 and HC-pro proteinases resulting in the production of three individual proteins. The P1 proteinase and the HC-pro cleave only their respective C-termini autocatalytically. 6K1 is essential for proper proteolytic separation of P3 from CI.

The protein localises to the host cytoplasmic vesicle. It is found in the host nucleus. It localises to the virion. The enzyme catalyses RNA(n) + a ribonucleoside 5'-triphosphate = RNA(n+1) + diphosphate. It catalyses the reaction Hydrolyzes glutaminyl bonds, and activity is further restricted by preferences for the amino acids in P6 - P1' that vary with the species of potyvirus, e.g. Glu-Xaa-Xaa-Tyr-Xaa-Gln-|-(Ser or Gly) for the enzyme from tobacco etch virus. The natural substrate is the viral polyprotein, but other proteins and oligopeptides containing the appropriate consensus sequence are also cleaved.. The catalysed reaction is Hydrolyzes a Gly-|-Gly bond at its own C-terminus, commonly in the sequence -Tyr-Xaa-Val-Gly-|-Gly, in the processing of the potyviral polyprotein.. Required for aphid transmission and also has proteolytic activity. Only cleaves a Gly-Gly dipeptide at its own C-terminus. Interacts with virions and aphid stylets. Acts as a suppressor of RNA-mediated gene silencing, also known as post-transcriptional gene silencing (PTGS), a mechanism of plant viral defense that limits the accumulation of viral RNAs. May have RNA-binding activity. In terms of biological role, has helicase activity. It may be involved in replication. Functionally, indispensable for virus replication. Reduces the abundance of host transcripts related to jasmonic acid biosynthesis therefore altering the host defenses. In order to increase its own stability, decreases host protein degradation pathways. Its function is as follows. Indispensable for virus replication. Mediates the cap-independent, EIF4E-dependent translation of viral genomic RNAs. Binds to the cap-binding site of host EIF4E and thus interferes with the host EIF4E-dependent mRNA export and translation. VPg-RNA directly binds EIF4E and is a template for transcription. Also forms trimeric complexes with EIF4E-EIF4G, which are templates for translation. In terms of biological role, has RNA-binding and proteolytic activities. Main protease that processes most of the polyprotein cleavages. Functionally, an RNA-dependent RNA polymerase that plays an essential role in the virus replication. Its function is as follows. Involved in aphid transmission, cell-to-cell and systemis movement, encapsidation of the viral RNA and in the regulation of viral RNA amplification. The sequence is that of Genome polyprotein from Tobacco vein mottling virus (TVMV).